The following is a 285-amino-acid chain: Probable endonuclease 4 (285 aa).

Residues His-69, His-109, Glu-145, Asp-179, His-182, His-216, Asp-229, His-231, and Glu-261 each contribute to the Zn(2+) site.

It belongs to the AP endonuclease 2 family. Zn(2+) is required as a cofactor.

It catalyses the reaction Endonucleolytic cleavage to 5'-phosphooligonucleotide end-products.. Its function is as follows. Endonuclease IV plays a role in DNA repair. It cleaves phosphodiester bonds at apurinic or apyrimidinic (AP) sites, generating a 3'-hydroxyl group and a 5'-terminal sugar phosphate. The chain is Probable endonuclease 4 from Shigella dysenteriae serotype 1 (strain Sd197).